A 265-amino-acid polypeptide reads, in one-letter code: Tryptophan 2,3-dioxygenase (265 aa).

Substrate contacts are provided by residues 38–42 and arginine 104; that span reads FIVVH. Residue histidine 223 coordinates heme. Residue threonine 237 coordinates substrate.

This sequence belongs to the tryptophan 2,3-dioxygenase family. Homotetramer. It depends on heme as a cofactor.

The catalysed reaction is L-tryptophan + O2 = N-formyl-L-kynurenine. It participates in amino-acid degradation; L-tryptophan degradation via kynurenine pathway; L-kynurenine from L-tryptophan: step 1/2. In terms of biological role, heme-dependent dioxygenase that catalyzes the oxidative cleavage of the L-tryptophan (L-Trp) pyrrole ring and converts L-tryptophan to N-formyl-L-kynurenine. Catalyzes the oxidative cleavage of the indole moiety. This Anaeromyxobacter dehalogenans (strain 2CP-C) protein is Tryptophan 2,3-dioxygenase.